The chain runs to 190 residues: Translation machinery-associated protein 22 (190 aa).

The interval 63 to 83 (LNVSGTKDSNAEEQPAKLTKE) is disordered. Residues 99–170 (VLIKTIERTK…DIFDFILEKF (72 aa)) enclose the SUI1 domain.

This sequence belongs to the DENR family. Interacts with the 40S ribosomal subunit.

The protein resides in the cytoplasm. The sequence is that of Translation machinery-associated protein 22 (tma22) from Schizosaccharomyces pombe (strain 972 / ATCC 24843) (Fission yeast).